A 266-amino-acid polypeptide reads, in one-letter code: UPF0328 protein ECU05_1610/ECU11_0120 (266 aa).

Belongs to the UPF0328 family.

The polypeptide is UPF0328 protein ECU05_1610/ECU11_0120 (Encephalitozoon cuniculi (strain GB-M1) (Microsporidian parasite)).